Consider the following 614-residue polypeptide: UvrABC system protein C (614 aa).

A GIY-YIG domain is found at T14–I91. In terms of domain architecture, UVR spans N196–L231. A disordered region spans residues L595 to P614.

This sequence belongs to the UvrC family. In terms of assembly, interacts with UvrB in an incision complex.

The protein localises to the cytoplasm. Its function is as follows. The UvrABC repair system catalyzes the recognition and processing of DNA lesions. UvrC both incises the 5' and 3' sides of the lesion. The N-terminal half is responsible for the 3' incision and the C-terminal half is responsible for the 5' incision. This Streptococcus pneumoniae (strain Taiwan19F-14) protein is UvrABC system protein C.